We begin with the raw amino-acid sequence, 95 residues long: Aspartyl/glutamyl-tRNA(Asn/Gln) amidotransferase subunit C (95 aa).

This sequence belongs to the GatC family. In terms of assembly, heterotrimer of A, B and C subunits.

It catalyses the reaction L-glutamyl-tRNA(Gln) + L-glutamine + ATP + H2O = L-glutaminyl-tRNA(Gln) + L-glutamate + ADP + phosphate + H(+). It carries out the reaction L-aspartyl-tRNA(Asn) + L-glutamine + ATP + H2O = L-asparaginyl-tRNA(Asn) + L-glutamate + ADP + phosphate + 2 H(+). Its function is as follows. Allows the formation of correctly charged Asn-tRNA(Asn) or Gln-tRNA(Gln) through the transamidation of misacylated Asp-tRNA(Asn) or Glu-tRNA(Gln) in organisms which lack either or both of asparaginyl-tRNA or glutaminyl-tRNA synthetases. The reaction takes place in the presence of glutamine and ATP through an activated phospho-Asp-tRNA(Asn) or phospho-Glu-tRNA(Gln). This is Aspartyl/glutamyl-tRNA(Asn/Gln) amidotransferase subunit C from Pelobacter propionicus (strain DSM 2379 / NBRC 103807 / OttBd1).